Here is a 302-residue protein sequence, read N- to C-terminus: uncharacterized protein (302 aa).

Residues 1–24 (MTEISELASSSQKPEKTKYNLPKP) are disordered.

This is an uncharacterized protein from Schizosaccharomyces pombe (strain 972 / ATCC 24843) (Fission yeast).